The following is a 2382-amino-acid chain: Serine/threonine-protein kinase WNK1 (2382 aa).

Disordered regions lie at residues 1-81 (MSGG…RFFR) and 95-203 (LPGL…QQDD). 2 positions are modified to phosphoserine: Ser15 and Ser19. Basic and acidic residues predominate over residues 50–66 (RTEEYRRRRHTMDKDSR). Thr60 bears the Phosphothreonine mark. Low complexity-rich tracts occupy residues 95–108 (LPGLPLSLPQPSIP) and 125–153 (VTATATSQVAQQPPAAAAPGEQAVAGPAP). Ser167 and Ser174 each carry phosphoserine. One can recognise a Protein kinase domain in the interval 221–479 (LKFDIEIGRG…IKDLLNHAFF (259 aa)). Ser231 lines the ATP pocket. Chloride is bound by residues Phe283 and Leu299. ATP-binding positions include 301 to 304 (TELM) and Lys351. The active-site Proton acceptor is the Asp368. Residues Leu369 and Leu371 each coordinate chloride. Residues Ser378 and Ser382 each carry the phosphoserine; by autocatalysis modification. The tract at residues 488–555 (ELAEEDDGEK…VCEGDHKTMA (68 aa)) is autoinhibitory domain. Basic and acidic residues predominate over residues 573–588 (QLVREEQEKKKQEESS). Disordered regions lie at residues 573-779 (QLVR…QPQA), 1018-1041 (QPGGSLAQAPTTSSQQAVLESTQG), and 1053-1119 (VAQT…SRPK). Polar residues predominate over residues 598 to 614 (ASQTGIKQLPSASTGIP). A compositionally biased stretch (low complexity) spans 615–625 (TASTTSASVST). The interval 628–638 (EPEEPEADQHQ) is interaction with KLHL3. The segment covering 637 to 689 (HQQLQYQQPSISVLSDGTVDSGQGSSVFTESRVSSQQTVSYGSQHEQAHSTGT) has biased composition (polar residues). Over residues 709–779 (PPSSVAQGQS…TAQPVSQPQA (71 aa)) the composition is skewed to low complexity. Over residues 1025–1041 (QAPTTSSQQAVLESTQG) the composition is skewed to polar residues. The segment covering 1053–1077 (VAQTQATQPTTLASSVDSAHSDVAS) has biased composition (low complexity). The segment covering 1080 to 1090 (SDGNENVPSSS) has biased composition (polar residues). Basic residues predominate over residues 1098–1119 (TKRHYRKSVRSRSRHEKTSRPK). The RFXV motif 1 signature appears at 1257–1260 (RFIV). At Ser1261 the chain carries Phosphoserine. 2 stretches are compositionally biased toward low complexity: residues 1457–1467 (SASAGGSTATP) and 1733–1745 (QVSTPVSTTTSGV). Disordered stretches follow at residues 1457-1476 (SASAGGSTATPGPKPPAVVS) and 1733-1790 (QVST…TQSQ). A Phosphothreonine modification is found at Thr1848. An RFXV motif 2 motif is present at residues 1859–1862 (RFQV). A disordered region spans residues 1866–1948 (ADGAQKEGKN…QPTKVGRFQV (83 aa)). Basic and acidic residues predominate over residues 1869–1884 (AQKEGKNKSEDAKSVH). Residues 1887–1905 (SSTSESSVLSSSSPESTLV) are compositionally biased toward low complexity. Over residues 1927-1940 (KTTASEAKSDTGQP) the composition is skewed to polar residues. 2 short sequence motifs (RFXV motif) span residues 1945–1948 (RFQV) and 1957–1960 (RFSV). A phosphoserine mark is found at Ser1978, Ser2002, Ser2011, Ser2012, Ser2027, Ser2029, and Ser2032. Residues 1994–2003 (PKKEKPELSE) show a composition bias toward basic and acidic residues. Disordered regions lie at residues 1994 to 2069 (PKKE…DIED) and 2101 to 2196 (LYTK…NLYS). A compositionally biased stretch (low complexity) spans 2035–2062 (QLSSKSLPSQNLSQSLSNSFNSSYMSSD). Position 2121 is a phosphoserine (Ser2121). The span at 2122–2134 (GRRRRPTKSKGSK) shows a compositional bias: basic residues. The span at 2135–2145 (SSRSSSLGNKS) shows a compositional bias: low complexity. 2 stretches are compositionally biased toward polar residues: residues 2146–2167 (PQLSGNLSGQSAASVLHPQQTL) and 2175–2196 (ESGQNQLLQPLKPSPSSDNLYS). The amphipathic alpha-helix stretch occupies residues 2241–2261 (SRKGTFTDDLHKLVDNWARDA). 2 positions are modified to phosphoserine: Ser2270 and Ser2286. Residues 2332 to 2352 (PFGAQWSGTGGPAPQPLGQFQ) are disordered. Residues Ser2370 and Ser2372 each carry the phosphoserine modification.

Belongs to the protein kinase superfamily. Ser/Thr protein kinase family. WNK subfamily. Interacts with WNK3. Interacts with WNK4; inhibiting the activity of WNK4. Interacts with SGK1; promoting its activation. Associates with the mTORC2 complex. Interacts with UVRAG. Interacts (via amphipathic alpha-helix region) with EMC2; promoting the ER membrane protein complex assembly. In terms of assembly, interacts with isoform 1; inhibiting isoform 1 activity. It depends on Mg(2+) as a cofactor. Autophosphorylated at Ser-378 and Ser-382, promoting its activity. Autophosphorylation at Ser-382 is inhibited by intracellular calcium. Phosphorylation at Thr-60 increases ability to activate SGK1. In terms of processing, ubiquitinated by the BCR(KLHL3) complex, leading to its degradation. Also ubiquitinated by the BCR(KLHL2) complex. Post-translationally, may be O-glycosylated. As to expression, widely expressed, with highest levels observed in the testis, heart, kidney and skeletal muscle. Strong expression in dorsal root ganglia and spinal cord. In terms of tissue distribution, this isoform is kidney-specific and specifically expressed in the distal convoluted tubule (DCT) and connecting tubule (CNT) of the nephron.

The protein localises to the cytoplasm. It localises to the nucleus. The protein resides in the cytoskeleton. It is found in the spindle. The catalysed reaction is L-seryl-[protein] + ATP = O-phospho-L-seryl-[protein] + ADP + H(+). It catalyses the reaction L-threonyl-[protein] + ATP = O-phospho-L-threonyl-[protein] + ADP + H(+). With respect to regulation, activated in response to hyperosmotic stress: cell shrinkage promotes formation of a membraneless compartment that concentrates WNK1 with its substrates, OXSR1/OSR1 and STK39/SPAK. Activation requires autophosphorylation of Ser-382 and, to a lower extent, Ser-378. Autophosphorylation and subsequent activation is inhibited by increases in intracellular ionic strength: Cl(-) potently inhibits WNK1 kinase activity via direct binding. Also inhibited by K(+) ions. Inhibited by small compounds staurosporine, tyrphostin 47, as well as Src tyrosine kinase inhibitors PP1 and PP2. Functionally, serine/threonine-protein kinase component of the WNK1-SPAK/OSR1 kinase cascade, which acts as a key regulator of blood pressure and regulatory volume increase by promoting ion influx. WNK1 mediates regulatory volume increase in response to hyperosmotic stress by acting as a molecular crowding sensor, which senses cell shrinkage and mediates formation of a membraneless compartment by undergoing liquid-liquid phase separation. The membraneless compartment concentrates WNK1 with its substrates, OXSR1/OSR1 and STK39/SPAK, promoting WNK1-dependent phosphorylation and activation of downstream kinases OXSR1/OSR1 and STK39/SPAK. Following activation, OXSR1/OSR1 and STK39/SPAK catalyze phosphorylation of ion cotransporters SLC12A1/NKCC2, SLC12A2/NKCC1, SLC12A5/KCC2 and SLC12A6/KCC3, regulating their activity. Phosphorylation of Na-K-Cl cotransporters SLC12A2/NKCC1 and SLC12A2/NKCC1 promote their activation and ion influx; simultaneously, phosphorylation of K-Cl cotransporters SLC12A5/KCC2 and SLC12A6/KCC3 inhibit their activity, blocking ion efflux. Also acts as a regulator of angiogenesis in endothelial cells via activation of OXSR1/OSR1 and STK39/SPAK: activation of OXSR1/OSR1 regulates chemotaxis and invasion, while STK39/SPAK regulates endothelial cell proliferation. Also acts independently of the WNK1-SPAK/OSR1 kinase cascade by catalyzing phosphorylation of other substrates, such as SYT2, PCF11 and NEDD4L. Mediates phosphorylation of SYT2, regulating SYT2 association with phospholipids and membrane-binding. Regulates mRNA export in the nucleus by mediating phosphorylation of PCF11, thereby decreasing the association between PCF11 and POLR2A/RNA polymerase II and promoting mRNA export to the cytoplasm. Acts as a negative regulator of autophagy. Required for the abscission step during mitosis, independently of the WNK1-SPAK/OSR1 kinase cascade. May also play a role in actin cytoskeletal reorganization. Also acts as a scaffold protein independently of its protein kinase activity: negatively regulates cell membrane localization of various transporters and channels, such as SLC4A4, SLC26A6, SLC26A9, TRPV4 and CFTR. Involved in the regulation of epithelial Na(+) channel (ENaC) by promoting activation of SGK1 in a kinase-independent manner: probably acts as a scaffold protein that promotes the recruitment of SGK1 to the mTORC2 complex in response to chloride, leading to mTORC2-dependent phosphorylation and activation of SGK1. Acts as an assembly factor for the ER membrane protein complex independently of its protein kinase activity: associates with EMC2 in the cytoplasm via its amphipathic alpha-helix, and prevents EMC2 ubiquitination and subsequent degradation, thereby promoting EMC2 stabilization. In terms of biological role, kinase-defective isoform specifically expressed in kidney, which acts as a dominant-negative regulator of the longer isoform 1. Does not directly inhibit WNK4 and has no direct effect on sodium and chloride ion transport. Down-regulates sodium-chloride cotransporter activity indirectly by inhibiting isoform 1, it associates with isoform 1 and attenuates its kinase activity. In kidney, may play an important role regulating sodium and potassium balance. The sequence is that of Serine/threonine-protein kinase WNK1 from Homo sapiens (Human).